The chain runs to 870 residues: Leucine--tRNA ligase (870 aa).

Residues P42 to H52 carry the 'HIGH' region motif. A 'KMSKS' region motif is present at residues K629 to S633. ATP is bound at residue K632.

This sequence belongs to the class-I aminoacyl-tRNA synthetase family.

It is found in the cytoplasm. It catalyses the reaction tRNA(Leu) + L-leucine + ATP = L-leucyl-tRNA(Leu) + AMP + diphosphate. The protein is Leucine--tRNA ligase of Ectopseudomonas mendocina (strain ymp) (Pseudomonas mendocina).